The following is a 353-amino-acid chain: Protein RecA (353 aa).

65–72 (GPESSGKT) lines the ATP pocket.

Belongs to the RecA family.

The protein localises to the cytoplasm. Can catalyze the hydrolysis of ATP in the presence of single-stranded DNA, the ATP-dependent uptake of single-stranded DNA by duplex DNA, and the ATP-dependent hybridization of homologous single-stranded DNAs. It interacts with LexA causing its activation and leading to its autocatalytic cleavage. This chain is Protein RecA, found in Aeromonas salmonicida (strain A449).